The following is a 119-amino-acid chain: Large ribosomal subunit protein bL20 (119 aa).

Belongs to the bacterial ribosomal protein bL20 family.

Binds directly to 23S ribosomal RNA and is necessary for the in vitro assembly process of the 50S ribosomal subunit. It is not involved in the protein synthesizing functions of that subunit. This chain is Large ribosomal subunit protein bL20, found in Rhodopseudomonas palustris (strain BisB18).